The sequence spans 511 residues: Phosphoenolpyruvate carboxylase (511 aa).

This sequence belongs to the PEPCase type 2 family. As to quaternary structure, homotetramer. Mg(2+) is required as a cofactor.

It carries out the reaction oxaloacetate + phosphate = phosphoenolpyruvate + hydrogencarbonate. Functionally, catalyzes the irreversible beta-carboxylation of phosphoenolpyruvate (PEP) to form oxaloacetate (OAA), a four-carbon dicarboxylic acid source for the tricarboxylic acid cycle. This is Phosphoenolpyruvate carboxylase from Saccharolobus islandicus (strain Y.G.57.14 / Yellowstone #1) (Sulfolobus islandicus).